Reading from the N-terminus, the 69-residue chain is Guanine nucleotide-binding protein subunit gamma (69 aa).

Ser2 bears the N-acetylserine mark. Position 66 is a cysteine methyl ester (Cys66). Cys66 carries the S-geranylgeranyl cysteine lipid modification. Residues 67–69 (SVL) constitute a propeptide, removed in mature form.

The protein belongs to the G protein gamma family. As to quaternary structure, g proteins are composed of 3 units, alpha, beta and gamma. Interacts with gpbA, and this requires phlp1. Post-translationally, this protein is thought to be subject to lipidation, and this requires phlp1.

The protein resides in the cell membrane. Its function is as follows. Guanine nucleotide-binding proteins (G proteins) are involved as a modulator or transducer in various transmembrane signaling systems. This major G-protein of the squid photoreceptor is involved in visual transduction. The beta and gamma chains are required for the GTPase activity, for replacement of GDP by GTP, and for G protein-effector interaction. Required for normal chemotaxis in response to cAMP. In Dictyostelium discoideum (Social amoeba), this protein is Guanine nucleotide-binding protein subunit gamma (gpgA).